A 219-amino-acid polypeptide reads, in one-letter code: Glutathione S-transferase (219 aa).

The GST N-terminal domain occupies 2–89; the sequence is SQPILGYWDI…YLGRKYKLNG (88 aa). Residues 8-9, 44-47, K51, 60-61, and 73-74 contribute to the glutathione site; these read YW, RSEW, NL, and QT. The 117-residue stretch at 91–207 folds into the GST C-terminal domain; it reads NDHEEIRISM…YIKKQQPKTF (117 aa). Y117 is a binding site for substrate.

The protein belongs to the GST superfamily. Mu family. Homodimer.

Its subcellular location is the cytoplasm. The catalysed reaction is RX + glutathione = an S-substituted glutathione + a halide anion + H(+). In Dermatophagoides pteronyssinus (European house dust mite), this protein is Glutathione S-transferase.